The primary structure comprises 167 residues: Crossover junction endodeoxyribonuclease RuvC (167 aa).

Catalysis depends on residues Asp8, Glu68, and Asp140. Asp8, Glu68, and Asp140 together coordinate Mg(2+).

Belongs to the RuvC family. In terms of assembly, homodimer which binds Holliday junction (HJ) DNA. The HJ becomes 2-fold symmetrical on binding to RuvC with unstacked arms; it has a different conformation from HJ DNA in complex with RuvA. In the full resolvosome a probable DNA-RuvA(4)-RuvB(12)-RuvC(2) complex forms which resolves the HJ. Mg(2+) serves as cofactor.

The protein localises to the cytoplasm. It carries out the reaction Endonucleolytic cleavage at a junction such as a reciprocal single-stranded crossover between two homologous DNA duplexes (Holliday junction).. In terms of biological role, the RuvA-RuvB-RuvC complex processes Holliday junction (HJ) DNA during genetic recombination and DNA repair. Endonuclease that resolves HJ intermediates. Cleaves cruciform DNA by making single-stranded nicks across the HJ at symmetrical positions within the homologous arms, yielding a 5'-phosphate and a 3'-hydroxyl group; requires a central core of homology in the junction. The consensus cleavage sequence is 5'-(A/T)TT(C/G)-3'. Cleavage occurs on the 3'-side of the TT dinucleotide at the point of strand exchange. HJ branch migration catalyzed by RuvA-RuvB allows RuvC to scan DNA until it finds its consensus sequence, where it cleaves and resolves the cruciform DNA. The polypeptide is Crossover junction endodeoxyribonuclease RuvC (Sinorhizobium medicae (strain WSM419) (Ensifer medicae)).